We begin with the raw amino-acid sequence, 438 residues long: 23S rRNA (uracil(1939)-C(5))-methyltransferase RlmD (438 aa).

The TRAM domain maps to 10-69; that stretch reads KASVNTKHLSVDVVRLDHNSAGIAFVDKKPVFIEGALPEEQAIIQFIEQKKQYSRAKLIK. [4Fe-4S] cluster is bound by residues cysteine 82, cysteine 88, cysteine 91, and cysteine 169. The S-adenosyl-L-methionine site is built by glutamine 272, phenylalanine 301, asparagine 306, glutamate 322, asparagine 349, and aspartate 370. The active-site Nucleophile is cysteine 396.

It belongs to the class I-like SAM-binding methyltransferase superfamily. RNA M5U methyltransferase family. RlmD subfamily.

It carries out the reaction uridine(1939) in 23S rRNA + S-adenosyl-L-methionine = 5-methyluridine(1939) in 23S rRNA + S-adenosyl-L-homocysteine + H(+). In terms of biological role, catalyzes the formation of 5-methyl-uridine at position 1939 (m5U1939) in 23S rRNA. In Aliivibrio salmonicida (strain LFI1238) (Vibrio salmonicida (strain LFI1238)), this protein is 23S rRNA (uracil(1939)-C(5))-methyltransferase RlmD.